We begin with the raw amino-acid sequence, 1233 residues long: Anion exchange protein 3 (1233 aa).

Residues 1–11 show a composition bias toward pro residues; it reads MANGVIPPPGG. Disordered stretches follow at residues 1 to 320 and 431 to 500; these read MANG…RRPH and DDKD…DGHR. The Cytoplasmic segment spans residues 1–709; it reads MANGVIPPPG…DLRDALHSQC (709 aa). Basic and acidic residues predominate over residues 58 to 73; that stretch reads DPEKPSRSFSERDFAF. 2 stretches are compositionally biased toward basic residues: residues 74–97 and 104–113; these read HRHI…KLRR and RHTRRKRKKE. The segment covering 137–153 has biased composition (acidic residues); the sequence is GEEEEEEEEEGESETEA. Phosphoserine is present on residues S168, S171, S176, and S199. The span at 201–216 shows a compositional bias: low complexity; it reads QRSVSSSSPRARAPRV. A compositionally biased stretch (basic and acidic residues) spans 268–290; sequence DDMKSHRLEDNPGVRRHLVKEPS. An Omega-N-methylarginine modification is found at R296. Positions 437 to 450 are enriched in low complexity; sequence SFPRNPSSSSVNSV. The segment covering 482-500 has biased composition (basic and acidic residues); it reads HDPDAKERPLHMPGGDGHR. The next 4 membrane-spanning stretches (helical) occupy residues 710-732, 738-775, 795-817, and 827-848; these read VAAV…GLLG, LMGV…LLVF, VWVG…TFLV, and IFAF…YKVF. Residues 710 to 1233 are membrane (anion exchange); sequence VAAVLFIYFA…DEYNELHMPV (524 aa). Residue N874 is glycosylated (N-linked (GlcNAc...) asparagine). Residues 894-911 form a helical membrane-spanning segment; it reads ALLSLILMLGTFLIAFFL. At 912 to 926 the chain is on the cytoplasmic side; it reads RKFRNSRFLGGKARR. 5 helical membrane passes run 927–947, 981–1003, 1029–1050, 1084–1129, and 1156–1192; these read IIGD…DYSI, PFPP…LIFM, LLLI…LTAA, VTGV…IQLS, and MHLF…TVPL. C1166 carries S-palmitoyl cysteine lipidation.

It belongs to the anion exchanger (TC 2.A.31) family.

The protein localises to the cell membrane. The catalysed reaction is hydrogencarbonate(in) + chloride(out) = hydrogencarbonate(out) + chloride(in). In terms of biological role, sodium-independent anion exchanger which mediates the electroneutral exchange of chloride for bicarbonate ions across the cell membrane. May be involved in the regulation of intracellular pH, and the modulation of cardiac action potential. The protein is Anion exchange protein 3 (SLC4A3) of Oryctolagus cuniculus (Rabbit).